A 212-amino-acid chain; its full sequence is Methylthioribulose-1-phosphate dehydratase (212 aa).

Zn(2+) is bound by residues histidine 97 and histidine 99.

It belongs to the aldolase class II family. MtnB subfamily. As to quaternary structure, homotetramer. It depends on Zn(2+) as a cofactor.

It catalyses the reaction 5-(methylsulfanyl)-D-ribulose 1-phosphate = 5-methylsulfanyl-2,3-dioxopentyl phosphate + H2O. Its pathway is amino-acid biosynthesis; L-methionine biosynthesis via salvage pathway; L-methionine from S-methyl-5-thio-alpha-D-ribose 1-phosphate: step 2/6. Functionally, catalyzes the dehydration of methylthioribulose-1-phosphate (MTRu-1-P) into 2,3-diketo-5-methylthiopentyl-1-phosphate (DK-MTP-1-P). The protein is Methylthioribulose-1-phosphate dehydratase of Bacillus thuringiensis (strain Al Hakam).